Reading from the N-terminus, the 745-residue chain is Protein transport protein SEC23 D (745 aa).

4 residues coordinate Zn(2+): Cys-53, Cys-56, Cys-73, and Cys-76. A zinc finger-like region spans residues 53-76 (CENCYAYFNTYCELDQWAWNCSLC).

This sequence belongs to the SEC23/SEC24 family. SEC24 subfamily. In terms of assembly, component of the coat protein complex II (COPII), composed of at least five proteins: the Sec23/24 complex, the Sec13/31 complex and Sar1. As to expression, mostly expressed in closed floral bud, pollen and flowers, and, to a lower extent, in mature siliques, roots and leaf primordia.

It is found in the cytoplasmic vesicle. Its subcellular location is the COPII-coated vesicle membrane. The protein resides in the endoplasmic reticulum membrane. The protein localises to the membrane. Component of the coat protein complex II (COPII) which promotes the formation of transport vesicles from the endoplasmic reticulum (ER). The coat has two main functions, the physical deformation of the endoplasmic reticulum membrane into vesicles and the selection of cargo molecules. May contribute to COPII-coated vesicles formation and ER-Golgi vesicle transport. Together with SEC23A, essential for pollen wall development and exine patterning, probably by regulating endoplasmic reticulum (ER) export of lipids and proteins (e.g. sporopollenin) necessary for pollen wall formation. Also involved in plastid physiology in anther tapetal cells. The chain is Protein transport protein SEC23 D from Arabidopsis thaliana (Mouse-ear cress).